Reading from the N-terminus, the 355-residue chain is Guanine nucleotide-binding protein G(i) subunit alpha-2 (355 aa).

Residue G2 is the site of N-myristoyl glycine attachment. Residue C3 is the site of S-palmitoyl cysteine attachment. One can recognise a G-alpha domain in the interval 32–355; sequence REVKLLLLGA…KNNLKDCGLF (324 aa). The G1 motif stretch occupies residues 35–48; it reads KLLLLGAGESGKST. GTP-binding positions include 40–47, 176–182, 201–205, 270–273, and A327; these read GAGESGKS, LRTRVKT, DVGGQ, and NKKD. Residues S47 and T182 each contribute to the Mg(2+) site. Residues 174–182 are G2 motif; sequence DVLRTRVKT. Residues 197-206 are G3 motif; the sequence is FKMFDVGGQR. The G4 motif stretch occupies residues 266–273; sequence ILFLNKKD. The G5 motif stretch occupies residues 325 to 330; sequence TCATDT.

Belongs to the G-alpha family. G(i/o/t/z) subfamily. G proteins are composed of 3 units; alpha, beta and gamma. The alpha chain contains the guanine nucleotide binding site. In this context, interacts with GNB2. Interacts with UNC5B. Interacts with GPSM1. Interacts with RGS12 and RGS14. Interacts (inactive GDP-bound form) with NUCB1 (via GBA motif); the interaction leads to activation of GNAI3. Interacts (inactive GDP-bound form) with CCDC88C/DAPLE (via GBA motif). Interacts (inactive GDP-bound form) with CCDC8A/GIV (via GBA motif). Ubiquitously expressed. Most abundant in the lung and in the spleen.

Its subcellular location is the cytoplasm. The protein resides in the cytoskeleton. The protein localises to the microtubule organizing center. It is found in the centrosome. It localises to the cell membrane. Its subcellular location is the membrane. Guanine nucleotide-binding proteins (G proteins) are involved as modulators or transducers in various transmembrane signaling systems. The G(i) proteins are involved in hormonal regulation of adenylate cyclase: they inhibit the cyclase in response to beta-adrenergic stimuli. May play a role in cell division. In Cavia porcellus (Guinea pig), this protein is Guanine nucleotide-binding protein G(i) subunit alpha-2 (GNAI2).